A 283-amino-acid polypeptide reads, in one-letter code: Diaminopimelate epimerase (283 aa).

Residues N13 and N66 each coordinate substrate. C75 serves as the catalytic Proton donor. Substrate is bound by residues 76–77, N165, N198, and 216–217; these read GN and ER. C225 functions as the Proton acceptor in the catalytic mechanism. 226-227 contributes to the substrate binding site; it reads GT.

Belongs to the diaminopimelate epimerase family. As to quaternary structure, homodimer.

The protein localises to the cytoplasm. It carries out the reaction (2S,6S)-2,6-diaminopimelate = meso-2,6-diaminopimelate. It participates in amino-acid biosynthesis; L-lysine biosynthesis via DAP pathway; DL-2,6-diaminopimelate from LL-2,6-diaminopimelate: step 1/1. Catalyzes the stereoinversion of LL-2,6-diaminopimelate (L,L-DAP) to meso-diaminopimelate (meso-DAP), a precursor of L-lysine and an essential component of the bacterial peptidoglycan. This Acaryochloris marina (strain MBIC 11017) protein is Diaminopimelate epimerase.